Reading from the N-terminus, the 366-residue chain is GTP cyclohydrolase 1 type 2 homolog (366 aa).

Zn(2+) is bound by residues histidine 64, histidine 65, aspartate 102, histidine 326, and glutamate 329.

It belongs to the GTP cyclohydrolase I type 2/NIF3 family. Homohexamer.

This is GTP cyclohydrolase 1 type 2 homolog from Staphylococcus aureus (strain MSSA476).